The sequence spans 335 residues: Nucleoid-associated protein YejK (335 aa).

The protein belongs to the YejK family.

It is found in the cytoplasm. Its subcellular location is the nucleoid. The polypeptide is Nucleoid-associated protein YejK (Shigella sonnei (strain Ss046)).